We begin with the raw amino-acid sequence, 323 residues long: Methionyl-tRNA formyltransferase (323 aa).

115–118 (SLLP) contributes to the (6S)-5,6,7,8-tetrahydrofolate binding site.

This sequence belongs to the Fmt family.

The enzyme catalyses L-methionyl-tRNA(fMet) + (6R)-10-formyltetrahydrofolate = N-formyl-L-methionyl-tRNA(fMet) + (6S)-5,6,7,8-tetrahydrofolate + H(+). In terms of biological role, attaches a formyl group to the free amino group of methionyl-tRNA(fMet). The formyl group appears to play a dual role in the initiator identity of N-formylmethionyl-tRNA by promoting its recognition by IF2 and preventing the misappropriation of this tRNA by the elongation apparatus. The chain is Methionyl-tRNA formyltransferase from Lactococcus lactis subsp. cremoris (strain MG1363).